We begin with the raw amino-acid sequence, 182 residues long: ATP synthase subunit b, chloroplastic (182 aa).

A helical transmembrane segment spans residues 31–53 (IINISVVLGVLVYFGKGVLSNLL).

The protein belongs to the ATPase B chain family. In terms of assembly, F-type ATPases have 2 components, F(1) - the catalytic core - and F(0) - the membrane proton channel. F(1) has five subunits: alpha(3), beta(3), gamma(1), delta(1), epsilon(1). F(0) has four main subunits: a(1), b(1), b'(1) and c(10-14). The alpha and beta chains form an alternating ring which encloses part of the gamma chain. F(1) is attached to F(0) by a central stalk formed by the gamma and epsilon chains, while a peripheral stalk is formed by the delta, b and b' chains.

It is found in the plastid. The protein localises to the chloroplast thylakoid membrane. F(1)F(0) ATP synthase produces ATP from ADP in the presence of a proton or sodium gradient. F-type ATPases consist of two structural domains, F(1) containing the extramembraneous catalytic core and F(0) containing the membrane proton channel, linked together by a central stalk and a peripheral stalk. During catalysis, ATP synthesis in the catalytic domain of F(1) is coupled via a rotary mechanism of the central stalk subunits to proton translocation. Functionally, component of the F(0) channel, it forms part of the peripheral stalk, linking F(1) to F(0). The chain is ATP synthase subunit b, chloroplastic from Welwitschia mirabilis (Tree tumbo).